Here is a 361-residue protein sequence, read N- to C-terminus: tRNA pseudouridine synthase D (361 aa).

The Nucleophile role is filled by Asp-76. The TRUD domain occupies 151 to 318 (GIPNYFGYQR…EQGSRRLAWI (168 aa)).

Belongs to the pseudouridine synthase TruD family.

It carries out the reaction uridine(13) in tRNA = pseudouridine(13) in tRNA. Responsible for synthesis of pseudouridine from uracil-13 in transfer RNAs. This is tRNA pseudouridine synthase D from Wolinella succinogenes (strain ATCC 29543 / DSM 1740 / CCUG 13145 / JCM 31913 / LMG 7466 / NCTC 11488 / FDC 602W) (Vibrio succinogenes).